We begin with the raw amino-acid sequence, 199 residues long: Holliday junction branch migration complex subunit RuvA (199 aa).

The interval 1–63 (MIAYIEGKLA…EDAHTLFGFA (63 aa)) is domain I. The segment at 64-142 (DLMEKEMFLH…KDALLAGSDS (79 aa)) is domain II. Residues 143-151 (KQNFSVSHN) form a flexible linker region. Residues 151–199 (NSIRSEALTALITLGFTKTVAEKNLDLILKGNSNSFTLEDLIKQALKMS) form a domain III region.

This sequence belongs to the RuvA family. In terms of assembly, homotetramer. Forms an RuvA(8)-RuvB(12)-Holliday junction (HJ) complex. HJ DNA is sandwiched between 2 RuvA tetramers; dsDNA enters through RuvA and exits via RuvB. An RuvB hexamer assembles on each DNA strand where it exits the tetramer. Each RuvB hexamer is contacted by two RuvA subunits (via domain III) on 2 adjacent RuvB subunits; this complex drives branch migration. In the full resolvosome a probable DNA-RuvA(4)-RuvB(12)-RuvC(2) complex forms which resolves the HJ.

It localises to the cytoplasm. Its function is as follows. The RuvA-RuvB-RuvC complex processes Holliday junction (HJ) DNA during genetic recombination and DNA repair, while the RuvA-RuvB complex plays an important role in the rescue of blocked DNA replication forks via replication fork reversal (RFR). RuvA specifically binds to HJ cruciform DNA, conferring on it an open structure. The RuvB hexamer acts as an ATP-dependent pump, pulling dsDNA into and through the RuvAB complex. HJ branch migration allows RuvC to scan DNA until it finds its consensus sequence, where it cleaves and resolves the cruciform DNA. The chain is Holliday junction branch migration complex subunit RuvA from Cytophaga hutchinsonii (strain ATCC 33406 / DSM 1761 / CIP 103989 / NBRC 15051 / NCIMB 9469 / D465).